The sequence spans 201 residues: Imidazole glycerol phosphate synthase subunit HisH (201 aa).

The Glutamine amidotransferase type-1 domain maps to 1-201 (MVFIADYGAG…LKVLANFAEL (201 aa)). The active-site Nucleophile is Cys-79. Residues His-183 and Glu-185 contribute to the active site.

In terms of assembly, heterodimer of HisH and HisF.

The protein localises to the cytoplasm. It catalyses the reaction 5-[(5-phospho-1-deoxy-D-ribulos-1-ylimino)methylamino]-1-(5-phospho-beta-D-ribosyl)imidazole-4-carboxamide + L-glutamine = D-erythro-1-(imidazol-4-yl)glycerol 3-phosphate + 5-amino-1-(5-phospho-beta-D-ribosyl)imidazole-4-carboxamide + L-glutamate + H(+). It carries out the reaction L-glutamine + H2O = L-glutamate + NH4(+). The protein operates within amino-acid biosynthesis; L-histidine biosynthesis; L-histidine from 5-phospho-alpha-D-ribose 1-diphosphate: step 5/9. IGPS catalyzes the conversion of PRFAR and glutamine to IGP, AICAR and glutamate. The HisH subunit catalyzes the hydrolysis of glutamine to glutamate and ammonia as part of the synthesis of IGP and AICAR. The resulting ammonia molecule is channeled to the active site of HisF. The sequence is that of Imidazole glycerol phosphate synthase subunit HisH from Chlorobium chlorochromatii (strain CaD3).